A 75-amino-acid chain; its full sequence is Peptide Ctri10033 (75 aa).

A signal peptide spans 1-22 (MNSKYLFVFLILIVTFTDLCQG). The residue at position 43 (Arg-43) is an Arginine amide. Residues 47–75 (ELGSQYDYLQDFRKRELDLDDLLSKFPDY) constitute a propeptide that is removed on maturation.

It belongs to the non-disulfide-bridged peptide (NDBP) superfamily. Short antimicrobial peptide (group 4) family. As to expression, expressed by the venom gland.

It is found in the secreted. The protein is Peptide Ctri10033 of Chaerilus tricostatus (Scorpion).